Reading from the N-terminus, the 220-residue chain is Deoxyribose-phosphate aldolase (220 aa).

Aspartate 89 acts as the Proton donor/acceptor in catalysis. Lysine 151 functions as the Schiff-base intermediate with acetaldehyde in the catalytic mechanism. Lysine 180 acts as the Proton donor/acceptor in catalysis.

This sequence belongs to the DeoC/FbaB aldolase family. DeoC type 1 subfamily.

The protein resides in the cytoplasm. It carries out the reaction 2-deoxy-D-ribose 5-phosphate = D-glyceraldehyde 3-phosphate + acetaldehyde. Its pathway is carbohydrate degradation; 2-deoxy-D-ribose 1-phosphate degradation; D-glyceraldehyde 3-phosphate and acetaldehyde from 2-deoxy-alpha-D-ribose 1-phosphate: step 2/2. In terms of biological role, catalyzes a reversible aldol reaction between acetaldehyde and D-glyceraldehyde 3-phosphate to generate 2-deoxy-D-ribose 5-phosphate. The sequence is that of Deoxyribose-phosphate aldolase from Streptococcus pneumoniae serotype 19F (strain G54).